A 457-amino-acid polypeptide reads, in one-letter code: ADP-dependent glucose/glucosamine kinase (457 aa).

Residues 5–457 enclose the ADPK domain; that stretch reads TNWESLYEKA…SAFVSEFSLH (453 aa). D-glucose-binding positions include Asp37, Glu91, 115–116, and His179; that span reads GQ. Glu269 serves as a coordination point for Mg(2+). Asn295 lines the ADP pocket. Residue Glu298 participates in Mg(2+) binding. Residues 345-346, Val432, and Gly442 contribute to the ADP site; that span reads HT. D-glucose is bound at residue Asp443. A Mg(2+)-binding site is contributed by Asp443. Catalysis depends on Asp443, which acts as the Proton acceptor.

Belongs to the ADP-dependent glucokinase family. It depends on Mg(2+) as a cofactor.

It is found in the cytoplasm. It carries out the reaction D-glucose + ADP = D-glucose 6-phosphate + AMP + H(+). The enzyme catalyses D-glucosamine + ADP = D-glucosamine 6-phosphate + AMP + H(+). It participates in carbohydrate degradation; glycolysis. With respect to regulation, inhibited by 8-bromoadenosine phosphate (8-Br-AMP). In terms of biological role, catalyzes the ADP-dependent phosphorylation of D-glucose to D-glucose 6-phosphate and glucosamine to glucosamine 6-phosphate. The protein is ADP-dependent glucose/glucosamine kinase of Pyrococcus horikoshii (strain ATCC 700860 / DSM 12428 / JCM 9974 / NBRC 100139 / OT-3).